The chain runs to 482 residues: UDP-N-acetylmuramate--L-alanine ligase (482 aa).

Position 129-135 (129-135 (GTHGKTT)) interacts with ATP.

This sequence belongs to the MurCDEF family.

The protein resides in the cytoplasm. The enzyme catalyses UDP-N-acetyl-alpha-D-muramate + L-alanine + ATP = UDP-N-acetyl-alpha-D-muramoyl-L-alanine + ADP + phosphate + H(+). It functions in the pathway cell wall biogenesis; peptidoglycan biosynthesis. Its function is as follows. Cell wall formation. The polypeptide is UDP-N-acetylmuramate--L-alanine ligase (Acinetobacter baumannii (strain AB307-0294)).